The primary structure comprises 322 residues: Methionyl-tRNA formyltransferase (322 aa).

Ser115–Pro118 serves as a coordination point for (6S)-5,6,7,8-tetrahydrofolate.

Belongs to the Fmt family.

It carries out the reaction L-methionyl-tRNA(fMet) + (6R)-10-formyltetrahydrofolate = N-formyl-L-methionyl-tRNA(fMet) + (6S)-5,6,7,8-tetrahydrofolate + H(+). Attaches a formyl group to the free amino group of methionyl-tRNA(fMet). The formyl group appears to play a dual role in the initiator identity of N-formylmethionyl-tRNA by promoting its recognition by IF2 and preventing the misappropriation of this tRNA by the elongation apparatus. The chain is Methionyl-tRNA formyltransferase from Treponema denticola (strain ATCC 35405 / DSM 14222 / CIP 103919 / JCM 8153 / KCTC 15104).